A 170-amino-acid chain; its full sequence is SKP1-like protein 16 (170 aa).

The interval 109 to 167 (ILAVNYLNVQDLLGLTCQTVADHMKDMSPEEVRELFNIENDYTPEEEDAIRKENAWAFE) is interaction with the F-box domain of F-box proteins.

This sequence belongs to the SKP1 family. As to quaternary structure, part of a SCF (SKP1-cullin-F-box) protein ligase complex. Interacts with CPR1/CPR30, At3g61590 and At4g11590. In terms of tissue distribution, mainly detected in the siliques.

It localises to the nucleus. It functions in the pathway protein modification; protein ubiquitination. In terms of biological role, involved in ubiquitination and subsequent proteasomal degradation of target proteins. Together with CUL1, RBX1 and a F-box protein, it forms a SCF E3 ubiquitin ligase complex. The functional specificity of this complex depends on the type of F-box protein. In the SCF complex, it serves as an adapter that links the F-box protein to CUL1. The sequence is that of SKP1-like protein 16 (ASK16) from Arabidopsis thaliana (Mouse-ear cress).